Reading from the N-terminus, the 164-residue chain is uncharacterized protein (164 aa).

The region spanning 26–158 (YAGFWVRFWA…DYIADTTVVH (133 aa)) is the RDD domain. Helical transmembrane passes span 35–55 (AFLL…SPLF) and 66–86 (MFTF…YFAL).

The protein localises to the cell membrane. This is an uncharacterized protein from Bacillus subtilis (strain 168).